We begin with the raw amino-acid sequence, 519 residues long: (3S,6E)-nerolidol synthase 1 (519 aa).

Mg(2+)-binding residues include D273, D277, D417, S421, and E425. Residues 273-277 carry the DDXXD motif motif; it reads DDIFD.

Belongs to the terpene synthase family. Tpsg subfamily. Mg(2+) is required as a cofactor. It depends on Mn(2+) as a cofactor. Expressed in receptacle tissue. Not detected in leaves or green fruit.

Its subcellular location is the cytoplasm. It is found in the cytosol. The catalysed reaction is (2E,6E)-farnesyl diphosphate + H2O = (3S,6E)-nerolidol + diphosphate. It participates in secondary metabolite biosynthesis; terpenoid biosynthesis. Its function is as follows. Involved in monoterpene (C10) and sesquiterpene (C15) biosynthesis. Converts geranyl diphosphate (GPP) into S-linalool and farnesyl diphosphate (FPP) into (3S)-E-nerolidol. Exclusively present and highly expressed in the fruit of cultivated (octaploid) varieties. In Fragaria ananassa (Strawberry), this protein is (3S,6E)-nerolidol synthase 1.